Here is a 388-residue protein sequence, read N- to C-terminus: Probable mannan endo-1,4-beta-mannosidase A-1 (388 aa).

A signal peptide spans 1 to 20 (MKLSPLMALAGLASAQLALA). Substrate contacts are provided by Trp93 and Asn206. The active-site Proton donor is Glu207. N-linked (GlcNAc...) asparagine glycosylation occurs at Asn264. Tyr282 contributes to the substrate binding site. Residue Glu315 is the Nucleophile of the active site. N-linked (GlcNAc...) asparagine glycosylation occurs at Asn335. Trp345 is a substrate binding site.

This sequence belongs to the glycosyl hydrolase 5 (cellulase A) family.

Its subcellular location is the secreted. It carries out the reaction Random hydrolysis of (1-&gt;4)-beta-D-mannosidic linkages in mannans, galactomannans and glucomannans.. In terms of biological role, endo-1,4-mannanase, a crucial enzyme for depolymerization of seed galactomannans and wood galactoglucomannans. This chain is Probable mannan endo-1,4-beta-mannosidase A-1 (manA-1), found in Aspergillus terreus (strain NIH 2624 / FGSC A1156).